A 515-amino-acid polypeptide reads, in one-letter code: Calcium-dependent protein kinase 2 (515 aa).

A disordered region spans residues 1–51; it reads MGNCCPGSGDAEPASSDASTGNGSSSFKAGASPSSAPAQNKPPAPIGPVLG. The N-myristoyl glycine moiety is linked to residue Gly-2. The segment covering 14–38 has biased composition (low complexity); the sequence is ASSDASTGNGSSSFKAGASPSSAPA. Residues 61-319 form the Protein kinase domain; the sequence is YTIGKELGRG…AYEVLNHPWI (259 aa). Residues 67 to 75 and Lys-90 each bind ATP; that span reads LGRGQFGVT. The active-site Proton acceptor is the Asp-185. Residues 325–355 are autoinhibitory domain; the sequence is APDTPLDNAVMNRLKQFRAMNQFKKAALRVI. 4 consecutive EF-hand domains span residues 362-397, 398-433, 434-469, and 473-504; these read EEIR…QGTK, LTEA…MNRM, DREE…KGLL, and DIKD…GNPE. The Ca(2+) site is built by Asp-375, Asp-377, Ser-379, Thr-381, Glu-386, Asp-411, Asp-413, Asn-415, Thr-417, Glu-422, Asp-447, Asp-449, Ser-451, Cys-453, Glu-458, Asp-482, Asp-484, Asp-486, Arg-488, and Glu-493.

It belongs to the protein kinase superfamily. Ser/Thr protein kinase family. CDPK subfamily. Expressed in heading panicles, spikelets and mature pollen grains.

The protein localises to the membrane. It carries out the reaction L-seryl-[protein] + ATP = O-phospho-L-seryl-[protein] + ADP + H(+). The enzyme catalyses L-threonyl-[protein] + ATP = O-phospho-L-threonyl-[protein] + ADP + H(+). Its activity is regulated as follows. Activated by calcium. Autophosphorylation may play an important role in the regulation of the kinase activity. Its function is as follows. May play a role in signal transduction pathways that involve calcium as a second messenger. This chain is Calcium-dependent protein kinase 2, found in Oryza sativa subsp. japonica (Rice).